The chain runs to 87 residues: UPF0473 protein PTH_1066 (87 aa).

The protein belongs to the UPF0473 family.

In Pelotomaculum thermopropionicum (strain DSM 13744 / JCM 10971 / SI), this protein is UPF0473 protein PTH_1066.